An 819-amino-acid chain; its full sequence is MAYRFIKWFEELRKEDVPLVGGKGANLGEMTNAGIPVPPGFCVTAEAYKYFVENVKISKEDVKRILGEKANKGTIAEVLAQAPDEPRPLQEWIMDIINRTNVDDSKQLQENTAVIRELIKSLDMPAEIADEIKQAYKELSQRFGKDEIYVAVRSSATAEDLPEASFAGQQETYLDVLGADDVIDKVKRCWASLWTARATFYRAKQGFDHSKVYLSAVVQKMVNSEKSGVMFTANPVTNNRNEIMINASWGLGEAVVSGAVTPDEYIVEKGTWKIKEKVIAKKEVMVIRNPETGKGTVTVKVAEYLGPEWVEKQVLTDEQIIEVAKMGQKIEEHYGWPQDIEWAYDKDDGKLYIVQSRPVTTLKETTTEEVEEVEEAEVILKGLGASPGIGAGRVVVIFDASEIDKVKEGDVLVTTMTNPDMVPAMKRAAAIITDEGGRTSHAAIVSRELGIPAVVGTKEATKKLKTGDYVTVDGTRGLVYKGIVKSLVEKKKKEEAAAAPGAAVAAAPLVTGTLVKVNVSMPEVAERAAATGADGVGLLRAEHMILSIGQHPVKFIKEGKEEELVEKLAEGIEKVAAAFYPRPVWYRTLDAPTNEFREMPGGEDEPEERNPMLGWRGIRRGLDQPELLRAEFKAIKKVVEKGYNNIGVMLPLVSHPEQIRKAKEIARSVGLEPHKDVAWGIMIEVPAAAIIIEDLIKEGIDFVSFGTNDLTQYTLAIDRDNERVAKLYDETHPAVLKLIKHVIKVCKRYGVETSICGQAGSDPKMARILVRLGIDSISANPDAVQLIRQVVAQEERKLMLEAARKRLFEEEEEEEEFLF.

His441 serves as the catalytic Tele-phosphohistidine intermediate. Residues Arg540, Arg587, Glu684, Gly706, Thr707, Asn708, and Asp709 each contribute to the substrate site. Position 684 (Glu684) interacts with Mg(2+). Asp709 provides a ligand contact to Mg(2+). Cys756 acts as the Proton donor in catalysis.

This sequence belongs to the PEP-utilizing enzyme family. Mg(2+) is required as a cofactor.

The enzyme catalyses pyruvate + ATP + H2O = phosphoenolpyruvate + AMP + phosphate + 2 H(+). The protein operates within carbohydrate biosynthesis; gluconeogenesis. Its function is as follows. Catalyzes the phosphorylation of pyruvate to phosphoenolpyruvate. This chain is Probable phosphoenolpyruvate synthase (ppsA), found in Pyrococcus abyssi (strain GE5 / Orsay).